The following is a 332-amino-acid chain: tRNA dimethylallyltransferase (332 aa).

30-37 (GPTAVGKT) is an ATP binding site. A substrate-binding site is contributed by 32–37 (TAVGKT). Residues 57-60 (DSMQ) form an interaction with substrate tRNA region.

It belongs to the IPP transferase family. As to quaternary structure, monomer. Mg(2+) serves as cofactor.

It carries out the reaction adenosine(37) in tRNA + dimethylallyl diphosphate = N(6)-dimethylallyladenosine(37) in tRNA + diphosphate. Catalyzes the transfer of a dimethylallyl group onto the adenine at position 37 in tRNAs that read codons beginning with uridine, leading to the formation of N6-(dimethylallyl)adenosine (i(6)A). This Natranaerobius thermophilus (strain ATCC BAA-1301 / DSM 18059 / JW/NM-WN-LF) protein is tRNA dimethylallyltransferase.